We begin with the raw amino-acid sequence, 795 residues long: Delta-1-pyrroline-5-carboxylate synthase (795 aa).

Residues 1–361 (MLSQVYRCGF…FFSEVKPAGP (361 aa)) form a glutamate 5-kinase region. Residues S117, D223, and N246 each contribute to the substrate site. Residues 266 to 267 (SD) and 305 to 311 (MGGMEAK) contribute to the ATP site. K311, K347, and K550 each carry N6-succinyllysine. Residues 362-795 (TVEQQGEMAR…NLPIPQRNTN (434 aa)) form a gamma-glutamyl phosphate reductase region.

It in the N-terminal section; belongs to the glutamate 5-kinase family. In the C-terminal section; belongs to the gamma-glutamyl phosphate reductase family. In terms of assembly, can form homodimers/multimers.

The protein localises to the mitochondrion. Its subcellular location is the mitochondrion matrix. The enzyme catalyses L-glutamate + ATP = L-glutamyl 5-phosphate + ADP. The catalysed reaction is L-glutamate 5-semialdehyde + phosphate + NADP(+) = L-glutamyl 5-phosphate + NADPH + H(+). It functions in the pathway amino-acid biosynthesis; L-proline biosynthesis; L-glutamate 5-semialdehyde from L-glutamate: step 1/2. Its pathway is amino-acid biosynthesis; L-proline biosynthesis; L-glutamate 5-semialdehyde from L-glutamate: step 2/2. Isoform Short: Inhibited by L-ornithine with a Ki of approximately 0.25 mm. Isoform Long: Insensitive to ornithine inhibition. This is due to the two amino acid insert which abolishes feedback inhibition of P5CS activity by L-ornithine. Its function is as follows. Bifunctional enzyme that converts glutamate to glutamate 5-semialdehyde, an intermediate in the biosynthesis of proline, ornithine and arginine. This Homo sapiens (Human) protein is Delta-1-pyrroline-5-carboxylate synthase (ALDH18A1).